Consider the following 389-residue polypeptide: Putative 8-amino-7-oxononanoate synthase (389 aa).

A substrate-binding site is contributed by R22. 109–110 (GY) is a pyridoxal 5'-phosphate binding site. H134 contacts substrate. Pyridoxal 5'-phosphate-binding positions include S182, 207-210 (DDAH), and 238-241 (TLSK). The residue at position 241 (K241) is an N6-(pyridoxal phosphate)lysine. T350 lines the substrate pocket.

Belongs to the class-II pyridoxal-phosphate-dependent aminotransferase family. BioF subfamily. As to quaternary structure, homodimer. The cofactor is pyridoxal 5'-phosphate.

It catalyses the reaction 6-carboxyhexanoyl-[ACP] + L-alanine + H(+) = (8S)-8-amino-7-oxononanoate + holo-[ACP] + CO2. It participates in cofactor biosynthesis; biotin biosynthesis. Its function is as follows. Catalyzes the decarboxylative condensation of pimeloyl-[acyl-carrier protein] and L-alanine to produce 8-amino-7-oxononanoate (AON), [acyl-carrier protein], and carbon dioxide. This chain is Putative 8-amino-7-oxononanoate synthase (bioF), found in Parvibaculum lavamentivorans (strain DS-1 / DSM 13023 / NCIMB 13966).